The following is a 355-amino-acid chain: Chorismate synthase (355 aa).

Residues arginine 44 and arginine 49 each contribute to the NADP(+) site. FMN is bound by residues histidine 121–serine 123, glycine 277, lysine 292–serine 296, and arginine 319.

The protein belongs to the chorismate synthase family. FMNH2 is required as a cofactor.

It carries out the reaction 5-O-(1-carboxyvinyl)-3-phosphoshikimate = chorismate + phosphate. Its pathway is metabolic intermediate biosynthesis; chorismate biosynthesis; chorismate from D-erythrose 4-phosphate and phosphoenolpyruvate: step 7/7. In terms of biological role, catalyzes the anti-1,4-elimination of the C-3 phosphate and the C-6 proR hydrogen from 5-enolpyruvylshikimate-3-phosphate (EPSP) to yield chorismate, which is the branch point compound that serves as the starting substrate for the three terminal pathways of aromatic amino acid biosynthesis. This reaction introduces a second double bond into the aromatic ring system. This is Chorismate synthase from Thermococcus kodakarensis (strain ATCC BAA-918 / JCM 12380 / KOD1) (Pyrococcus kodakaraensis (strain KOD1)).